Reading from the N-terminus, the 1048-residue chain is Selenate reductase subunit A (1048 aa).

A signal peptide (tat-type signal) is located at residues 1-39; that stretch reads MENQHQKFISRRNFIKTSALLGGTAFLGTGLPNIKKTYS. Residues 56-129 form the 4Fe-4S Mo/W bis-MGD-type domain; the sequence is ENILYSACLQ…AGIQHAYDPY (74 aa). Positions 63, 66, 70, and 115 each coordinate [4Fe-4S] cluster. A Mo-bis(molybdopterin guanine dinucleotide)-binding site is contributed by Cys270.

Belongs to the prokaryotic molybdopterin-containing oxidoreductase family. In terms of assembly, the complex is composed of three subunits: SrdA, SrdB and SrdC. [4Fe-4S] cluster is required as a cofactor. Mo-bis(molybdopterin guanine dinucleotide) serves as cofactor. Post-translationally, predicted to be exported by the Tat system. The position of the signal peptide cleavage has not been experimentally proven.

Its subcellular location is the secreted. It catalyses the reaction selenite + a quinone + H2O = selenate + a quinol. Component of the respiratory selenate reductase complex, which catalyzes the reduction of selenate to selenite. SrdA is probably the catalytic subunit that reduces selenate. The sequence is that of Selenate reductase subunit A from Mesobacillus selenatarsenatis (strain DSM 18680 / JCM 14380 / FERM P-15431 / SF-1).